The following is a 275-amino-acid chain: MKKYKRLLLMAGLVTLVFVLSACGTAPVSESSTGIWDRYIVYYFAQAIKFLSLGGSVGIGIILFTLVIRIILLPLMHFQTKSMRKTQELQPQLKALQQKYSSKDPETQRLFREEQQRLYAENNVNPYIGCLPLLVQLPIMMALYQAISRVPELKEGTFLWLSLDKPDPYLILPILAAVFTFASTYLSSMSQLETNASLKIMNYVMPAMIFFMGISLASSLSLYWVVSNAFQTGQTLLLNNPFKIRKEREEAARQAKARERALERAKSPKKKGKKK.

A signal peptide spans 1-22 (MKKYKRLLLMAGLVTLVFVLSA). The N-palmitoyl cysteine moiety is linked to residue cysteine 23. A lipid anchor (S-diacylglycerol cysteine) is attached at cysteine 23. 4 helical membrane-spanning segments follow: residues 53 to 73 (LGGS…IILL), 127 to 147 (YIGC…YQAI), 169 to 189 (YLIL…LSSM), and 206 to 226 (PAMI…YWVV). A compositionally biased stretch (basic and acidic residues) spans 249–266 (EEAARQAKARERALERAK). The disordered stretch occupies residues 249 to 275 (EEAARQAKARERALERAKSPKKKGKKK).

It belongs to the OXA1/ALB3/YidC family. Type 2 subfamily.

It is found in the cell membrane. Required for the insertion and/or proper folding and/or complex formation of integral membrane proteins into the membrane. Involved in integration of membrane proteins that insert both dependently and independently of the Sec translocase complex, as well as at least some lipoproteins. The polypeptide is Membrane protein insertase YidC (Enterococcus faecalis (strain ATCC 700802 / V583)).